Here is a 167-residue protein sequence, read N- to C-terminus: Large ribosomal subunit protein uL22 (167 aa).

The interval 120 to 167 (GSTATTVEDEAPKAKGAKGAKAKKAPAKKAAAKKAPAKKFAGKKTAKR) is disordered. A compositionally biased stretch (basic residues) spans 134 to 167 (KGAKGAKAKKAPAKKAAAKKAPAKKFAGKKTAKR).

It belongs to the universal ribosomal protein uL22 family. As to quaternary structure, part of the 50S ribosomal subunit.

In terms of biological role, this protein binds specifically to 23S rRNA; its binding is stimulated by other ribosomal proteins, e.g. L4, L17, and L20. It is important during the early stages of 50S assembly. It makes multiple contacts with different domains of the 23S rRNA in the assembled 50S subunit and ribosome. Its function is as follows. The globular domain of the protein is located near the polypeptide exit tunnel on the outside of the subunit, while an extended beta-hairpin is found that lines the wall of the exit tunnel in the center of the 70S ribosome. This is Large ribosomal subunit protein uL22 from Koribacter versatilis (strain Ellin345).